Consider the following 38-residue polypeptide: Putative ORF10 protein (38 aa).

In terms of assembly, binds host ZYG11B. This would not play any role in SARS-CoV-2 infection.

The polypeptide is Putative ORF10 protein (Severe acute respiratory syndrome coronavirus 2 (2019-nCoV)).